A 594-amino-acid polypeptide reads, in one-letter code: UvrABC system protein C (594 aa).

Residues aspartate 14–isoleucine 91 enclose the GIY-YIG domain. Residues aspartate 196 to methionine 231 enclose the UVR domain.

This sequence belongs to the UvrC family. In terms of assembly, interacts with UvrB in an incision complex.

It localises to the cytoplasm. Functionally, the UvrABC repair system catalyzes the recognition and processing of DNA lesions. UvrC both incises the 5' and 3' sides of the lesion. The N-terminal half is responsible for the 3' incision and the C-terminal half is responsible for the 5' incision. In Streptococcus equi subsp. zooepidemicus (strain MGCS10565), this protein is UvrABC system protein C.